The primary structure comprises 244 residues: 5-oxoprolinase subunit A (244 aa).

It belongs to the LamB/PxpA family. As to quaternary structure, forms a complex composed of PxpA, PxpB and PxpC.

The catalysed reaction is 5-oxo-L-proline + ATP + 2 H2O = L-glutamate + ADP + phosphate + H(+). Functionally, catalyzes the cleavage of 5-oxoproline to form L-glutamate coupled to the hydrolysis of ATP to ADP and inorganic phosphate. The chain is 5-oxoprolinase subunit A from Shigella flexneri serotype 5b (strain 8401).